Reading from the N-terminus, the 313-residue chain is Protein FixB (313 aa).

Residue 255–283 (LYLAVGISGQIQHMVGANASQTIFAINKD) coordinates FAD.

It belongs to the ETF alpha-subunit/FixB family. Heterodimer of FixA and FixB.

It participates in amine and polyamine metabolism; carnitine metabolism. Its function is as follows. Required for anaerobic carnitine reduction. May bring reductant to CaiA. This chain is Protein FixB, found in Shigella dysenteriae serotype 1 (strain Sd197).